The sequence spans 614 residues: 1-deoxy-D-xylulose-5-phosphate synthase (614 aa).

Residues His-74 and 115 to 117 contribute to the thiamine diphosphate site; that span reads AHS. Asp-146 contacts Mg(2+). Residues 147 to 148, Asn-175, Tyr-282, and Glu-363 each bind thiamine diphosphate; that span reads GA. Residue Asn-175 participates in Mg(2+) binding.

Belongs to the transketolase family. DXPS subfamily. As to quaternary structure, homodimer. The cofactor is Mg(2+). Thiamine diphosphate serves as cofactor.

It catalyses the reaction D-glyceraldehyde 3-phosphate + pyruvate + H(+) = 1-deoxy-D-xylulose 5-phosphate + CO2. Its pathway is metabolic intermediate biosynthesis; 1-deoxy-D-xylulose 5-phosphate biosynthesis; 1-deoxy-D-xylulose 5-phosphate from D-glyceraldehyde 3-phosphate and pyruvate: step 1/1. Catalyzes the acyloin condensation reaction between C atoms 2 and 3 of pyruvate and glyceraldehyde 3-phosphate to yield 1-deoxy-D-xylulose-5-phosphate (DXP). The polypeptide is 1-deoxy-D-xylulose-5-phosphate synthase (Nitrosomonas eutropha (strain DSM 101675 / C91 / Nm57)).